A 327-amino-acid polypeptide reads, in one-letter code: Complex I intermediate-associated protein 30, mitochondrial (327 aa).

Residues 1–24 (MALVHKLLRGTYFLRKFSKPTSAL) constitute a mitochondrion transit peptide. The interval 42–63 (PVASPGKASSQRKTEGDLQGDH) is disordered. Residues 53–63 (RKTEGDLQGDH) show a composition bias toward basic and acidic residues. Serine 318 bears the Phosphoserine mark.

The protein belongs to the CIA30 family. As to quaternary structure, part of the mitochondrial complex I assembly/MCIA complex that comprises at least the core subunits TMEM126B, NDUFAF1, ECSIT and ACAD9 and complement subunits such as COA1 and TMEM186. Interacts with ECSIT. Interacts with ACAD9. At early stages of complex I assembly, it is found in intermediate subcomplexes that contain different subunits including NDUFB6, NDUFA6, NDUFA9, NDUFS3, NDUFS7, ND1, ND2 and ND3. Interacts with TMEM70 and TMEM242. As to expression, ubiquitous.

The protein localises to the mitochondrion. It is found in the mitochondrion matrix. Functionally, as part of the MCIA complex, involved in the assembly of the mitochondrial complex I. This is Complex I intermediate-associated protein 30, mitochondrial from Homo sapiens (Human).